The following is a 127-amino-acid chain: CST complex subunit TEN1 (127 aa).

This sequence belongs to the TEN1 family. In terms of assembly, component of the CST complex, composed of CTC1, TEN1 and STN1. Interacts with STN1. No interaction with POT1A, but competes with it for STN1 binding. As to expression, ubiquitous. High expression in meristematic tissues and in vasculature.

It is found in the nucleus. It localises to the chromosome. The protein resides in the telomere. In terms of biological role, required for the maintenance of meristems and stem cells through the reduction of DNA damage. Promotes telomere integrity by maintaining telomere length and proper architecture of the chromosome terminus. Negatively regulates telomerase repeat addition processivity. Hampers contacts between enzymatically active telomerase and CST complex. The protein is CST complex subunit TEN1 of Arabidopsis thaliana (Mouse-ear cress).